Consider the following 197-residue polypeptide: Imidazoleglycerol-phosphate dehydratase (197 aa).

The protein belongs to the imidazoleglycerol-phosphate dehydratase family.

The protein localises to the cytoplasm. It carries out the reaction D-erythro-1-(imidazol-4-yl)glycerol 3-phosphate = 3-(imidazol-4-yl)-2-oxopropyl phosphate + H2O. It functions in the pathway amino-acid biosynthesis; L-histidine biosynthesis; L-histidine from 5-phospho-alpha-D-ribose 1-diphosphate: step 6/9. This is Imidazoleglycerol-phosphate dehydratase from Methylocella silvestris (strain DSM 15510 / CIP 108128 / LMG 27833 / NCIMB 13906 / BL2).